The chain runs to 349 residues: DNA polymerase IV (349 aa).

Residues 7-188 (IIHIDMDYFF…LPVKKLFGVG (182 aa)) form the UmuC domain. Mg(2+) contacts are provided by Asp-11 and Asp-106. Glu-107 is an active-site residue.

This sequence belongs to the DNA polymerase type-Y family. Monomer. Mg(2+) is required as a cofactor.

It is found in the cytoplasm. It catalyses the reaction DNA(n) + a 2'-deoxyribonucleoside 5'-triphosphate = DNA(n+1) + diphosphate. Its function is as follows. Poorly processive, error-prone DNA polymerase involved in untargeted mutagenesis. Copies undamaged DNA at stalled replication forks, which arise in vivo from mismatched or misaligned primer ends. These misaligned primers can be extended by PolIV. Exhibits no 3'-5' exonuclease (proofreading) activity. May be involved in translesional synthesis, in conjunction with the beta clamp from PolIII. This Francisella tularensis subsp. holarctica (strain OSU18) protein is DNA polymerase IV.